Consider the following 421-residue polypeptide: GTPase Obg (421 aa).

Residues 4–161 form the Obg domain; sequence LHFIDEAFNE…FKIKIQLKVL (158 aa). The OBG-type G domain maps to 162–327; that stretch reads ADVGLLGFPS…LKYAIKNLLQ (166 aa). GTP-binding positions include 168-175, 193-197, 214-217, 281-284, and 308-310; these read GFPSVGKS, FTTLF, DLPG, NKMD, and SLI. Ser-175 and Thr-195 together coordinate Mg(2+). Positions 343 to 421 constitute an OCT domain; sequence DLNSETQTFT…ICNYLFDFVI (79 aa).

It belongs to the TRAFAC class OBG-HflX-like GTPase superfamily. OBG GTPase family. Monomer. Mg(2+) is required as a cofactor.

The protein localises to the cytoplasm. In terms of biological role, an essential GTPase which binds GTP, GDP and possibly (p)ppGpp with moderate affinity, with high nucleotide exchange rates and a fairly low GTP hydrolysis rate. Plays a role in control of the cell cycle, stress response, ribosome biogenesis and in those bacteria that undergo differentiation, in morphogenesis control. The chain is GTPase Obg from Phytoplasma australiense.